An 89-amino-acid polypeptide reads, in one-letter code: Small ribosomal subunit protein uS15 (89 aa).

This sequence belongs to the universal ribosomal protein uS15 family. Part of the 30S ribosomal subunit. Forms a bridge to the 50S subunit in the 70S ribosome, contacting the 23S rRNA.

Its function is as follows. One of the primary rRNA binding proteins, it binds directly to 16S rRNA where it helps nucleate assembly of the platform of the 30S subunit by binding and bridging several RNA helices of the 16S rRNA. In terms of biological role, forms an intersubunit bridge (bridge B4) with the 23S rRNA of the 50S subunit in the ribosome. In Streptococcus pneumoniae (strain P1031), this protein is Small ribosomal subunit protein uS15.